Reading from the N-terminus, the 380-residue chain is Aprataxin (380 aa).

An FHA-like domain is found at 36–85; sequence PVIIGRTPELGITDKLCSRSQLELTSNCYKRYVLVKRLGANTSQINGIDI. The disordered stretch occupies residues 176–207; the sequence is VYAFDSPSPMSSRCEKKAESNKRAPTHKHWSQ. The span at 188–197 shows a compositional bias: basic and acidic residues; that stretch reads RCEKKAESNK. In terms of domain architecture, HIT spans 206 to 312; the sequence is SQGLKASMED…ISQDFQSSSF (107 aa). 2 interaction with DNA substrate regions span residues 231-235 and 294-295; these read DKYPK and SM. Positions 297–301 match the Histidine triad motif motif; it reads QMHMH. H299 acts as the Tele-AMP-histidine intermediate in catalysis. A C2H2-type; atypical zinc finger spans residues 356–378; that stretch reads LKCHRCKKPQKNIPTLKKHIDSC.

It localises to the nucleus. Its subcellular location is the nucleoplasm. The protein localises to the nucleolus. The enzyme catalyses a 5'-end adenosine-5'-diphospho-5'-2'-deoxyribonucleoside-DNA + H2O = a 5'-end 5'-phospho-2'-deoxyribonucleoside-DNA + AMP + 2 H(+). It catalyses the reaction a 5'-end adenosine-5'-diphospho-5'-ribonucleoside-2'-deoxyribonucleotide-DNA + H2O = a 5'-end 5'-phospho-ribonucleoside-2'-deoxyribonucleotide-DNA + AMP + 2 H(+). It carries out the reaction a 3'-end 2'-deoxyribonucleotide-3'-diphospho-5'-guanosine-DNA + H2O = a 3'-end 2'-deoxyribonucleotide 3'-phosphate-DNA + GMP + 2 H(+). DNA-binding protein involved in single-strand DNA break repair, double-strand DNA break repair and base excision repair. Resolves abortive DNA ligation intermediates formed either at base excision sites, or when DNA ligases attempt to repair non-ligatable breaks induced by reactive oxygen species. Catalyzes the release of adenylate groups covalently linked to 5'-phosphate termini, resulting in the production of 5'-phosphate termini that can be efficiently rejoined. Also able to hydrolyze adenosine 5'-monophosphoramidate (AMP-NH(2)) and diadenosine tetraphosphate (AppppA), but with lower catalytic activity. Likewise, catalyzes the release of 3'-linked guanosine (DNAppG) and inosine (DNAppI) from DNA, but has higher specific activity with 5'-linked adenosine (AppDNA). This chain is Aprataxin (APTX), found in Ciona intestinalis (Transparent sea squirt).